We begin with the raw amino-acid sequence, 529 residues long: Glucose transporter 2A (529 aa).

The tract at residues M1–A22 is disordered. The Cytoplasmic segment spans residues M1–Q43. The chain crosses the membrane as a helical span at residues V44–Y64. The Extracellular segment spans residues E65 to S119. A helical membrane pass occupies residues L120 to A140. Topologically, residues G141–S152 are cytoplasmic. A helical transmembrane segment spans residues F153–T173. The Extracellular segment spans residues N174–E175. A helical membrane pass occupies residues F176–I196. Topologically, residues C197 to G214 are cytoplasmic. Residues V215–L235 traverse the membrane as a helical segment. The Extracellular portion of the chain corresponds to D236 to R250. The chain crosses the membrane as a helical span at residues F251–F271. At L272–Q300 the chain is on the cytoplasmic side. The helical transmembrane segment at M301–N321 threads the bilayer. The Extracellular portion of the chain corresponds to A322–S339. Residues L340–A360 form a helical membrane-spanning segment. The Cytoplasmic portion of the chain corresponds to S361 to M368. The helical transmembrane segment at F369–F389 threads the bilayer. At P390–T404 the chain is on the extracellular side. A helical membrane pass occupies residues G405–A425. Over Q426 to S439 the chain is Cytoplasmic. A helical membrane pass occupies residues F440–T460. The Extracellular segment spans residues E461–A476. A helical transmembrane segment spans residues V477–L497. The Cytoplasmic segment spans residues Y498–N529. A disordered region spans residues N508–N529.

The protein belongs to the major facilitator superfamily. Sugar transporter (TC 2.A.1.1) family.

Its subcellular location is the membrane. Its function is as follows. Facilitative glucose transporter. In Trypanosoma brucei brucei, this protein is Glucose transporter 2A (THT2A).